We begin with the raw amino-acid sequence, 327 residues long: Phenylalanine--tRNA ligase alpha subunit (327 aa).

Residue glutamate 252 participates in Mg(2+) binding.

This sequence belongs to the class-II aminoacyl-tRNA synthetase family. Phe-tRNA synthetase alpha subunit type 1 subfamily. Tetramer of two alpha and two beta subunits. It depends on Mg(2+) as a cofactor.

Its subcellular location is the cytoplasm. It catalyses the reaction tRNA(Phe) + L-phenylalanine + ATP = L-phenylalanyl-tRNA(Phe) + AMP + diphosphate + H(+). The protein is Phenylalanine--tRNA ligase alpha subunit of Shigella boydii serotype 18 (strain CDC 3083-94 / BS512).